We begin with the raw amino-acid sequence, 336 residues long: Cell division protein ZipA (336 aa).

The Periplasmic portion of the chain corresponds to 1–2; sequence ME. A helical transmembrane segment spans residues 3–23; sequence LHILFFILAGLLIAVLISFSL. Residues 24–336 lie on the Cytoplasmic side of the membrane; the sequence is WSARREKSRI…SRQSYLARVS (313 aa). The segment at 56 to 77 is disordered; sequence PSLNPQSYAQTTGQHGETEADN. Residues 59-70 are compositionally biased toward polar residues; the sequence is NPQSYAQTTGQH.

This sequence belongs to the ZipA family. Interacts with FtsZ via their C-terminal domains.

It localises to the cell inner membrane. Functionally, essential cell division protein that stabilizes the FtsZ protofilaments by cross-linking them and that serves as a cytoplasmic membrane anchor for the Z ring. Also required for the recruitment to the septal ring of downstream cell division proteins. This chain is Cell division protein ZipA, found in Actinobacillus pleuropneumoniae serotype 3 (strain JL03).